A 341-amino-acid polypeptide reads, in one-letter code: Sulfate/thiosulfate import ATP-binding protein CysA 2 (341 aa).

Residues 3–235 (IRLENVVKTF…PNSSFVMRFL (233 aa)) form the ABC transporter domain. 35 to 42 (GPSGSGKT) lines the ATP pocket.

This sequence belongs to the ABC transporter superfamily. Sulfate/tungstate importer (TC 3.A.1.6) family. The complex is composed of two ATP-binding proteins (CysA), two transmembrane proteins (CysT and CysW) and a solute-binding protein (CysP).

It localises to the cell inner membrane. It carries out the reaction sulfate(out) + ATP + H2O = sulfate(in) + ADP + phosphate + H(+). The enzyme catalyses thiosulfate(out) + ATP + H2O = thiosulfate(in) + ADP + phosphate + H(+). In terms of biological role, part of the ABC transporter complex CysAWTP involved in sulfate/thiosulfate import. Responsible for energy coupling to the transport system. The polypeptide is Sulfate/thiosulfate import ATP-binding protein CysA 2 (Agrobacterium fabrum (strain C58 / ATCC 33970) (Agrobacterium tumefaciens (strain C58))).